The following is a 136-amino-acid chain: MGLLSRLRKREPISIYDKIGGHEAIEVVVEDFYVRVLADDQLSAFFSGTNMSRLKGKQVEFFAAALGGPEPYTGAPMKQVHQGRGITMHHFSLVAGHLADALTAAGVPSETITEILGVIAPLAVDVTSGESTTAPV.

His81 lines the heme pocket.

This sequence belongs to the truncated hemoglobin family. Group I subfamily. Homodimer. The cofactor is heme.

Its function is as follows. Binds oxygen cooperatively with very high affinity (P(50) = 0.013 mmHg at 20 degrees Celsius) because of a fast combination (25 microM(-1)sec(-1)) and a slow dissociation (0.2 sec(-1)) rate. This chain is Group 1 truncated hemoglobin GlbN (glbN), found in Mycobacterium bovis (strain ATCC BAA-935 / AF2122/97).